Consider the following 890-residue polypeptide: DNA mismatch repair protein MutS (890 aa).

An ATP-binding site is contributed by 607-614 (GPNMSGKS).

This sequence belongs to the DNA mismatch repair MutS family.

Functionally, this protein is involved in the repair of mismatches in DNA. It is possible that it carries out the mismatch recognition step. This protein has a weak ATPase activity. This chain is DNA mismatch repair protein MutS, found in Bacillus thuringiensis subsp. konkukian (strain 97-27).